A 78-amino-acid chain; its full sequence is Large ribosomal subunit protein bL28 (78 aa).

Residues 1–30 are disordered; it reads MAAHCQVTGAGPGFGHSISHSHRRTKRRFD.

This sequence belongs to the bacterial ribosomal protein bL28 family.

The chain is Large ribosomal subunit protein bL28 from Micrococcus luteus (strain ATCC 4698 / DSM 20030 / JCM 1464 / CCM 169 / CCUG 5858 / IAM 1056 / NBRC 3333 / NCIMB 9278 / NCTC 2665 / VKM Ac-2230) (Micrococcus lysodeikticus).